A 427-amino-acid polypeptide reads, in one-letter code: Enolase (427 aa).

Gln163 serves as a coordination point for (2R)-2-phosphoglycerate. Glu205 acts as the Proton donor in catalysis. Residues Asp242, Glu285, and Asp312 each contribute to the Mg(2+) site. Residues Lys337, Arg366, Ser367, and Lys388 each coordinate (2R)-2-phosphoglycerate. Lys337 acts as the Proton acceptor in catalysis.

Belongs to the enolase family. Requires Mg(2+) as cofactor.

It localises to the cytoplasm. The protein resides in the secreted. Its subcellular location is the cell surface. It carries out the reaction (2R)-2-phosphoglycerate = phosphoenolpyruvate + H2O. It participates in carbohydrate degradation; glycolysis; pyruvate from D-glyceraldehyde 3-phosphate: step 4/5. In terms of biological role, catalyzes the reversible conversion of 2-phosphoglycerate (2-PG) into phosphoenolpyruvate (PEP). It is essential for the degradation of carbohydrates via glycolysis. This chain is Enolase, found in Burkholderia thailandensis (strain ATCC 700388 / DSM 13276 / CCUG 48851 / CIP 106301 / E264).